The following is a 379-amino-acid chain: Putative acetyl-CoA C-acetyltransferase VraB (379 aa).

C86 (acyl-thioester intermediate) is an active-site residue. The active-site Proton acceptor is H338.

This sequence belongs to the thiolase-like superfamily. Thiolase family.

This Staphylococcus aureus (strain MRSA252) protein is Putative acetyl-CoA C-acetyltransferase VraB (vraB).